The following is a 246-amino-acid chain: AA9 family lytic polysaccharide monooxygenase D (246 aa).

An N-terminal signal peptide occupies residues 1–19 (MHLLSLLFPVIALIPTVLS). Residue His20 coordinates Cu(2+). A disulfide bridge links Cys78 with Cys196. N-linked (GlcNAc...) asparagine glycosylation is found at Asn86, Asn141, and Asn156. O2 is bound by residues His182 and Gln191. Tyr193 is a Cu(2+) binding site. N-linked (GlcNAc...) asparagine glycosylation is present at Asn235.

It belongs to the polysaccharide monooxygenase AA9 family. Cu(2+) is required as a cofactor.

The protein localises to the secreted. The catalysed reaction is [(1-&gt;4)-beta-D-glucosyl]n+m + reduced acceptor + O2 = 4-dehydro-beta-D-glucosyl-[(1-&gt;4)-beta-D-glucosyl]n-1 + [(1-&gt;4)-beta-D-glucosyl]m + acceptor + H2O.. Its function is as follows. Lytic polysaccharide monooxygenase (LPMO) that depolymerizes crystalline and amorphous polysaccharides via the oxidation of scissile alpha- or beta-(1-4)-glycosidic bonds, yielding C1 and C4 oxidation products. Catalysis by LPMOs requires the reduction of the active-site copper from Cu(II) to Cu(I) by a reducing agent and H(2)O(2) or O(2) as a cosubstrate. The polypeptide is AA9 family lytic polysaccharide monooxygenase D (Botryotinia fuckeliana (strain B05.10) (Noble rot fungus)).